A 121-amino-acid polypeptide reads, in one-letter code: Large ribosomal subunit protein uL18 (121 aa).

The disordered stretch occupies residues M1–L25. Over residues I13 to G23 the composition is skewed to basic residues.

This sequence belongs to the universal ribosomal protein uL18 family. Part of the 50S ribosomal subunit; part of the 5S rRNA/L5/L18/L25 subcomplex. Contacts the 5S and 23S rRNAs.

Functionally, this is one of the proteins that bind and probably mediate the attachment of the 5S RNA into the large ribosomal subunit, where it forms part of the central protuberance. The protein is Large ribosomal subunit protein uL18 of Streptococcus pyogenes serotype M28 (strain MGAS6180).